Reading from the N-terminus, the 198-residue chain is RNA 2',3'-cyclic phosphodiesterase (198 aa).

His-39 acts as the Proton donor in catalysis. Short sequence motifs (HXTX) lie at residues 39–42 and 130–133; these read HLTL and HITL. His-130 acts as the Proton acceptor in catalysis.

It belongs to the 2H phosphoesterase superfamily. ThpR family.

The enzyme catalyses a 3'-end 2',3'-cyclophospho-ribonucleotide-RNA + H2O = a 3'-end 2'-phospho-ribonucleotide-RNA + H(+). Functionally, hydrolyzes RNA 2',3'-cyclic phosphodiester to an RNA 2'-phosphomonoester. This is RNA 2',3'-cyclic phosphodiesterase from Thermus thermophilus (strain ATCC 27634 / DSM 579 / HB8).